We begin with the raw amino-acid sequence, 451 residues long: Serine--tRNA ligase (451 aa).

247-249 (TAE) lines the L-serine pocket. Residues 278–280 (RKE) and valine 294 each bind ATP. Glutamate 301 contacts L-serine. 365–368 (ELAS) is a binding site for ATP. Threonine 400 lines the L-serine pocket.

Belongs to the class-II aminoacyl-tRNA synthetase family. Type-1 seryl-tRNA synthetase subfamily. Homodimer. The tRNA molecule binds across the dimer.

Its subcellular location is the cytoplasm. The catalysed reaction is tRNA(Ser) + L-serine + ATP = L-seryl-tRNA(Ser) + AMP + diphosphate + H(+). It carries out the reaction tRNA(Sec) + L-serine + ATP = L-seryl-tRNA(Sec) + AMP + diphosphate + H(+). It functions in the pathway aminoacyl-tRNA biosynthesis; selenocysteinyl-tRNA(Sec) biosynthesis; L-seryl-tRNA(Sec) from L-serine and tRNA(Sec): step 1/1. Functionally, catalyzes the attachment of serine to tRNA(Ser). Is also able to aminoacylate tRNA(Sec) with serine, to form the misacylated tRNA L-seryl-tRNA(Sec), which will be further converted into selenocysteinyl-tRNA(Sec). The polypeptide is Serine--tRNA ligase (Pyrobaculum aerophilum (strain ATCC 51768 / DSM 7523 / JCM 9630 / CIP 104966 / NBRC 100827 / IM2)).